Consider the following 187-residue polypeptide: Peptide deformylase (187 aa).

2 residues coordinate Fe cation: C114 and H157. Residue E158 is part of the active site. H161 provides a ligand contact to Fe cation.

This sequence belongs to the polypeptide deformylase family. It depends on Fe(2+) as a cofactor.

The catalysed reaction is N-terminal N-formyl-L-methionyl-[peptide] + H2O = N-terminal L-methionyl-[peptide] + formate. In terms of biological role, removes the formyl group from the N-terminal Met of newly synthesized proteins. Requires at least a dipeptide for an efficient rate of reaction. N-terminal L-methionine is a prerequisite for activity but the enzyme has broad specificity at other positions. The chain is Peptide deformylase from Enterococcus faecalis (strain ATCC 700802 / V583).